A 499-amino-acid chain; its full sequence is Aspartyl/glutamyl-tRNA(Asn/Gln) amidotransferase subunit B (499 aa).

Belongs to the GatB/GatE family. GatB subfamily. Heterotrimer of A, B and C subunits.

It catalyses the reaction L-glutamyl-tRNA(Gln) + L-glutamine + ATP + H2O = L-glutaminyl-tRNA(Gln) + L-glutamate + ADP + phosphate + H(+). It carries out the reaction L-aspartyl-tRNA(Asn) + L-glutamine + ATP + H2O = L-asparaginyl-tRNA(Asn) + L-glutamate + ADP + phosphate + 2 H(+). Allows the formation of correctly charged Asn-tRNA(Asn) or Gln-tRNA(Gln) through the transamidation of misacylated Asp-tRNA(Asn) or Glu-tRNA(Gln) in organisms which lack either or both of asparaginyl-tRNA or glutaminyl-tRNA synthetases. The reaction takes place in the presence of glutamine and ATP through an activated phospho-Asp-tRNA(Asn) or phospho-Glu-tRNA(Gln). The chain is Aspartyl/glutamyl-tRNA(Asn/Gln) amidotransferase subunit B from Bifidobacterium longum (strain DJO10A).